Reading from the N-terminus, the 106-residue chain is UPF0235 protein OCAR_4310/OCA5_c02140 (106 aa).

It belongs to the UPF0235 family.

The chain is UPF0235 protein OCAR_4310/OCA5_c02140 from Afipia carboxidovorans (strain ATCC 49405 / DSM 1227 / KCTC 32145 / OM5) (Oligotropha carboxidovorans).